The chain runs to 351 residues: CCN family member 3 (351 aa).

Residues 1 to 24 form the signal peptide; it reads METGGGQGLPVLLLLLLLLRPCEV. One can recognise an IGFBP N-terminal domain in the interval 27-101; sequence REAACPRPCG…GGGAGICMVL (75 aa). Disulfide bonds link Cys31–Cys57, Cys35–Cys59, Cys39–Cys60, Cys46–Cys63, Cys71–Cys85, and Cys77–Cys98. One can recognise a VWFC domain in the interval 104-170; the sequence is DNCVFDGMIY…GECCEKWVCD (67 aa). The 46-residue stretch at 201–246 folds into the TSP type-1 domain; sequence NCIEQTTEWSACSKSCGMGFSTRVTNRNQQCEMVKQTRLCMMRPCE. 5 cysteine pairs are disulfide-bonded: Cys258-Cys295, Cys275-Cys309, Cys286-Cys325, Cys289-Cys327, and Cys294-Cys331. One can recognise a CTCK domain in the interval 258–332; that stretch reads CIQTKKSMKA…NTCVCHGNCP (75 aa). The N-linked (GlcNAc...) asparagine glycan is linked to Asn274.

The protein belongs to the CCN family. As to expression, brain and heart, and at a lower level in muscle and intestine, in the embryo. Lung and less so in brain and spleen, in adult chicken.

It is found in the secreted. The protein resides in the cytoplasm. Its subcellular location is the cell junction. It localises to the gap junction. Its function is as follows. Immediate-early protein likely to play a role in cell growth regulation. Its overexpression is associated with tumorigenesis and expression of a N-terminal-truncated version of CCN3 gene in chicken embryonic fibroblasts (CEF) is sufficient to induce the transformation of CEF in vitro. The sequence is that of CCN family member 3 (CCN3) from Gallus gallus (Chicken).